The chain runs to 459 residues: Zinc finger protein ZFP2 (459 aa).

C2H2-type zinc fingers lie at residues 100–122 (YGCD…QRIH), 128–150 (YTCN…QRTH), 156–178 (YKCH…QRTH), 184–206 (YQCK…ERIH), 212–234 (YKCH…QRTH), 240–262 (YECN…QRSH), 268–290 (YECS…QRNH), 296–318 (YKCN…QRLH), 324–346 (FECN…RRIH), 352–374 (YECM…QVIH), 380–402 (YECT…QRIH), 408–430 (YECD…QRIH), and 436–458 (YQCN…QRTH).

This sequence belongs to the krueppel C2H2-type zinc-finger protein family.

It localises to the nucleus. Its function is as follows. Probable transcription factor involved in neuronal differentiation and/or phenotypic maintenance. The polypeptide is Zinc finger protein ZFP2 (Zfp2) (Mus musculus (Mouse)).